A 107-amino-acid polypeptide reads, in one-letter code: Rhodocoxin (107 aa).

In terms of domain architecture, 2Fe-2S ferredoxin-type spans 2–106 (PTVTYVHPDG…GLIVRLPEEQ (105 aa)). 4 residues coordinate [2Fe-2S] cluster: cysteine 40, cysteine 46, cysteine 49, and cysteine 87.

The protein belongs to the adrenodoxin/putidaredoxin family. [2Fe-2S] cluster is required as a cofactor.

In terms of biological role, ferredoxin-type protein which transfers electrons from rhodocoxin reductase to cytochrome CYP116 (ThcB), which is involved in the degradation of thiocarbamate herbicides. In Rhodococcus erythropolis (Arthrobacter picolinophilus), this protein is Rhodocoxin (thcC).